The primary structure comprises 255 residues: Small ribosomal subunit protein uS2 (255 aa).

The protein belongs to the universal ribosomal protein uS2 family.

This Streptococcus thermophilus (strain CNRZ 1066) protein is Small ribosomal subunit protein uS2.